The sequence spans 64 residues: Large ribosomal subunit protein bL35 (64 aa).

Residues 27–47 (MNGSHNLEKKNRKRSRRLHQA) are disordered. A compositionally biased stretch (basic residues) spans 36-45 (KNRKRSRRLH).

This sequence belongs to the bacterial ribosomal protein bL35 family.

The polypeptide is Large ribosomal subunit protein bL35 (Chlorobium phaeobacteroides (strain DSM 266 / SMG 266 / 2430)).